Reading from the N-terminus, the 145-residue chain is Ribonuclease H (145 aa).

An RNase H type-1 domain is found at 2-143 (SKKEVIIYTD…ADSLARKAII (142 aa)). Positions 11, 49, 71, and 135 each coordinate Mg(2+).

This sequence belongs to the RNase H family. As to quaternary structure, monomer. Mg(2+) is required as a cofactor.

It is found in the cytoplasm. It carries out the reaction Endonucleolytic cleavage to 5'-phosphomonoester.. Endonuclease that specifically degrades the RNA of RNA-DNA hybrids. This Wolbachia pipientis wMel protein is Ribonuclease H.